The sequence spans 668 residues: COBRA-like protein 11 (668 aa).

The N-terminal stretch at 1–29 (MKKLRYVHLNLLLLLLPLINLQFPTLSLA) is a signal peptide. N-linked (GlcNAc...) asparagine glycans are attached at residues Asn69, Asn125, Asn254, Asn318, Asn329, Asn358, Asn412, Asn432, Asn473, Asn552, Asn560, and Asn579. The GPI-anchor amidated serine moiety is linked to residue Ser636. Positions 637–668 (SGMRLSGIRFLPSILLAITTFHAITDRLLTGV) are cleaved as a propeptide — removed in mature form.

It belongs to the COBRA family. In terms of tissue distribution, mostly expressed in flowers, stamen, anthers and pollen, and, to a lower extent, possibly in roots, stems, leaves and siliques.

The protein resides in the cell membrane. In terms of biological role, involved in the deposition of apical pectin cap and cellulose microfibrils in pollen tubes. Implicated in pollen tubes growth in the female transmitting tract of pistil and toward micropyles, via the perception of ovule guidance cues. The protein is COBRA-like protein 11 of Arabidopsis thaliana (Mouse-ear cress).